We begin with the raw amino-acid sequence, 302 residues long: Dihydroorotate dehydrogenase B (NAD(+)), catalytic subunit (302 aa).

Residues serine 23 and 47 to 48 (KG) each bind FMN. Substrate-binding positions include lysine 47 and 71-75 (NSVGL). Residues asparagine 101 and asparagine 128 each coordinate FMN. Asparagine 128 contributes to the substrate binding site. Cysteine 131 (nucleophile) is an active-site residue. Residues lysine 166 and isoleucine 192 each coordinate FMN. 193–194 (NT) is a substrate binding site. Residues glycine 218, 244–245 (GG), and 266–267 (GT) each bind FMN.

The protein belongs to the dihydroorotate dehydrogenase family. Type 1 subfamily. As to quaternary structure, heterotetramer of 2 PyrK and 2 PyrD type B subunits. FMN is required as a cofactor.

The protein resides in the cytoplasm. It carries out the reaction (S)-dihydroorotate + NAD(+) = orotate + NADH + H(+). It participates in pyrimidine metabolism; UMP biosynthesis via de novo pathway; orotate from (S)-dihydroorotate (NAD(+) route): step 1/1. Its function is as follows. Catalyzes the conversion of dihydroorotate to orotate with NAD(+) as electron acceptor. This is Dihydroorotate dehydrogenase B (NAD(+)), catalytic subunit (pyrD) from Alkaliphilus metalliredigens (strain QYMF).